The chain runs to 318 residues: Ribose-phosphate pyrophosphokinase (318 aa).

ATP is bound by residues 46-48 and 105-106; these read DGE and RQ. His139 and Asp178 together coordinate Mg(2+). Residue Lys201 is part of the active site. D-ribose 5-phosphate contacts are provided by residues Arg203, Asp227, and 231–235; that span reads DTAGT.

Belongs to the ribose-phosphate pyrophosphokinase family. Class I subfamily. Homohexamer. Mg(2+) is required as a cofactor.

The protein localises to the cytoplasm. It carries out the reaction D-ribose 5-phosphate + ATP = 5-phospho-alpha-D-ribose 1-diphosphate + AMP + H(+). The protein operates within metabolic intermediate biosynthesis; 5-phospho-alpha-D-ribose 1-diphosphate biosynthesis; 5-phospho-alpha-D-ribose 1-diphosphate from D-ribose 5-phosphate (route I): step 1/1. In terms of biological role, involved in the biosynthesis of the central metabolite phospho-alpha-D-ribosyl-1-pyrophosphate (PRPP) via the transfer of pyrophosphoryl group from ATP to 1-hydroxyl of ribose-5-phosphate (Rib-5-P). The chain is Ribose-phosphate pyrophosphokinase from Helicobacter pylori (strain J99 / ATCC 700824) (Campylobacter pylori J99).